The sequence spans 311 residues: Methionyl-tRNA formyltransferase (311 aa).

Residue 110–113 participates in (6S)-5,6,7,8-tetrahydrofolate binding; sequence SLLP.

The protein belongs to the Fmt family.

The enzyme catalyses L-methionyl-tRNA(fMet) + (6R)-10-formyltetrahydrofolate = N-formyl-L-methionyl-tRNA(fMet) + (6S)-5,6,7,8-tetrahydrofolate + H(+). Functionally, attaches a formyl group to the free amino group of methionyl-tRNA(fMet). The formyl group appears to play a dual role in the initiator identity of N-formylmethionyl-tRNA by promoting its recognition by IF2 and preventing the misappropriation of this tRNA by the elongation apparatus. The protein is Methionyl-tRNA formyltransferase of Streptococcus pyogenes serotype M49 (strain NZ131).